We begin with the raw amino-acid sequence, 484 residues long: tRNA sulfurtransferase (484 aa).

The THUMP domain maps to arginine 63–glutamine 167. Residues leucine 185–methionine 186, lysine 267, glycine 289, and glutamine 298 contribute to the ATP site. A disulfide bridge connects residues cysteine 346 and cysteine 457. A Rhodanese domain is found at valine 405–proline 483. The active-site Cysteine persulfide intermediate is cysteine 457.

Belongs to the ThiI family.

It localises to the cytoplasm. The enzyme catalyses [ThiI sulfur-carrier protein]-S-sulfanyl-L-cysteine + a uridine in tRNA + 2 reduced [2Fe-2S]-[ferredoxin] + ATP + H(+) = [ThiI sulfur-carrier protein]-L-cysteine + a 4-thiouridine in tRNA + 2 oxidized [2Fe-2S]-[ferredoxin] + AMP + diphosphate. It carries out the reaction [ThiS sulfur-carrier protein]-C-terminal Gly-Gly-AMP + S-sulfanyl-L-cysteinyl-[cysteine desulfurase] + AH2 = [ThiS sulfur-carrier protein]-C-terminal-Gly-aminoethanethioate + L-cysteinyl-[cysteine desulfurase] + A + AMP + 2 H(+). Its pathway is cofactor biosynthesis; thiamine diphosphate biosynthesis. Functionally, catalyzes the ATP-dependent transfer of a sulfur to tRNA to produce 4-thiouridine in position 8 of tRNAs, which functions as a near-UV photosensor. Also catalyzes the transfer of sulfur to the sulfur carrier protein ThiS, forming ThiS-thiocarboxylate. This is a step in the synthesis of thiazole, in the thiamine biosynthesis pathway. The sulfur is donated as persulfide by IscS. The polypeptide is tRNA sulfurtransferase (Pseudomonas paraeruginosa (strain DSM 24068 / PA7) (Pseudomonas aeruginosa (strain PA7))).